The primary structure comprises 246 residues: 23S rRNA (guanosine-2'-O-)-methyltransferase RlmB (246 aa).

S-adenosyl-L-methionine is bound by residues Gly198, Ile218, and Leu227.

This sequence belongs to the class IV-like SAM-binding methyltransferase superfamily. RNA methyltransferase TrmH family. RlmB subfamily.

The protein localises to the cytoplasm. The catalysed reaction is guanosine(2251) in 23S rRNA + S-adenosyl-L-methionine = 2'-O-methylguanosine(2251) in 23S rRNA + S-adenosyl-L-homocysteine + H(+). Specifically methylates the ribose of guanosine 2251 in 23S rRNA. This is 23S rRNA (guanosine-2'-O-)-methyltransferase RlmB from Shewanella oneidensis (strain ATCC 700550 / JCM 31522 / CIP 106686 / LMG 19005 / NCIMB 14063 / MR-1).